The following is a 149-amino-acid chain: Prefoldin subunit alpha (149 aa).

This sequence belongs to the prefoldin alpha subunit family. Heterohexamer of two alpha and four beta subunits.

The protein localises to the cytoplasm. In terms of biological role, molecular chaperone capable of stabilizing a range of proteins. Seems to fulfill an ATP-independent, HSP70-like function in archaeal de novo protein folding. The polypeptide is Prefoldin subunit alpha (Methanoculleus marisnigri (strain ATCC 35101 / DSM 1498 / JR1)).